The chain runs to 267 residues: Hemin import ATP-binding protein HmuV (267 aa).

One can recognise an ABC transporter domain in the interval 3–243; sequence LEVRGIEVWR…ELVARVFGLR (241 aa). 35–42 contacts ATP; sequence GPNGAGKS.

The protein belongs to the ABC transporter superfamily. Heme (hemin) importer (TC 3.A.1.14.5) family. As to quaternary structure, the complex is composed of two ATP-binding proteins (HmuV), two transmembrane proteins (HmuU) and a solute-binding protein (HmuT).

Its subcellular location is the cell inner membrane. Its function is as follows. Part of the ABC transporter complex HmuTUV involved in hemin import. Responsible for energy coupling to the transport system. The polypeptide is Hemin import ATP-binding protein HmuV (Myxococcus xanthus (strain DK1622)).